Reading from the N-terminus, the 173-residue chain is NADH-ubiquinone oxidoreductase chain 6 (173 aa).

5 consecutive transmembrane segments (helical) span residues Met1 to Ser21, Tyr27 to Gly47, Ile48 to Val68, Val87 to Phe107, and Cys139 to Leu159.

The protein belongs to the complex I subunit 6 family.

Its subcellular location is the mitochondrion membrane. The catalysed reaction is a ubiquinone + NADH + 5 H(+)(in) = a ubiquinol + NAD(+) + 4 H(+)(out). In terms of biological role, core subunit of the mitochondrial membrane respiratory chain NADH dehydrogenase (Complex I) that is believed to belong to the minimal assembly required for catalysis. Complex I functions in the transfer of electrons from NADH to the respiratory chain. The immediate electron acceptor for the enzyme is believed to be ubiquinone. The polypeptide is NADH-ubiquinone oxidoreductase chain 6 (MT-ND6) (Alca torda (Razorbill)).